A 355-amino-acid polypeptide reads, in one-letter code: DNA-directed RNA polymerase subunit alpha (355 aa).

Residues 1–233 (MVREKVRVST…DLFIPFLHKE (233 aa)) form an alpha N-terminal domain (alpha-NTD) region. Residues 268–355 (KKKIALKSIF…EIYCYSIFFH (88 aa)) form an alpha C-terminal domain (alpha-CTD) region.

The protein belongs to the RNA polymerase alpha chain family. As to quaternary structure, in plastids the minimal PEP RNA polymerase catalytic core is composed of four subunits: alpha, beta, beta', and beta''. When a (nuclear-encoded) sigma factor is associated with the core the holoenzyme is formed, which can initiate transcription.

The protein localises to the plastid. The protein resides in the chloroplast. The catalysed reaction is RNA(n) + a ribonucleoside 5'-triphosphate = RNA(n+1) + diphosphate. Its function is as follows. DNA-dependent RNA polymerase catalyzes the transcription of DNA into RNA using the four ribonucleoside triphosphates as substrates. This is DNA-directed RNA polymerase subunit alpha from Jasminum nudiflorum (Winter jasmine).